A 335-amino-acid polypeptide reads, in one-letter code: Lipase chaperone (335 aa).

The chain crosses the membrane as a helical span at residues 1 to 21 (MSGSILLLPLAIALGLGFFIA).

This sequence belongs to the lipase chaperone family.

The protein localises to the cell inner membrane. Functionally, may be involved in the folding of the extracellular lipase during its passage through the periplasm. The sequence is that of Lipase chaperone from Stutzerimonas stutzeri (strain A1501) (Pseudomonas stutzeri).